Here is a 767-residue protein sequence, read N- to C-terminus: Protein transport protein Sec23B (767 aa).

Alanine 2 carries the N-acetylalanine modification. The Zn(2+) site is built by cysteine 61, cysteine 66, cysteine 85, and cysteine 88. Residue lysine 564 is modified to N6-acetyllysine. The stretch at 634-720 (PEPVLLDSSS…EHGGSQARFL (87 aa)) is one Gelsolin-like repeat.

The protein belongs to the SEC23/SEC24 family. SEC23 subfamily. COPII is composed of at least five proteins: the Sec23/24 complex, the Sec13/31 complex and Sar1. Interacts with SAR1A. As to expression, ubiquitously expressed.

The protein resides in the cytoplasmic vesicle. The protein localises to the COPII-coated vesicle membrane. It localises to the endoplasmic reticulum membrane. Its subcellular location is the cytoplasm. It is found in the cytosol. In terms of biological role, component of the coat protein complex II (COPII) which promotes the formation of transport vesicles from the endoplasmic reticulum (ER). The coat has two main functions, the physical deformation of the endoplasmic reticulum membrane into vesicles and the selection of cargo molecules for their transport to the Golgi complex. In Homo sapiens (Human), this protein is Protein transport protein Sec23B.